The chain runs to 248 residues: Ribosomal RNA small subunit methyltransferase J (248 aa).

Residues 98–99 (RD), 114–115 (ER), 150–151 (SS), and aspartate 168 contribute to the S-adenosyl-L-methionine site.

This sequence belongs to the methyltransferase superfamily. RsmJ family.

It is found in the cytoplasm. The catalysed reaction is guanosine(1516) in 16S rRNA + S-adenosyl-L-methionine = N(2)-methylguanosine(1516) in 16S rRNA + S-adenosyl-L-homocysteine + H(+). Its function is as follows. Specifically methylates the guanosine in position 1516 of 16S rRNA. The sequence is that of Ribosomal RNA small subunit methyltransferase J from Shewanella baltica (strain OS223).